A 327-amino-acid chain; its full sequence is GTPase Obg (327 aa).

Positions 2-160 (HLFKDSLNLI…LNLRLELSLI (159 aa)) constitute an Obg domain. The 166-residue stretch at 161-326 (ADVGLVGLPN…LVSEFFSLAK (166 aa)) folds into the OBG-type G domain. GTP-binding positions include 167–174 (GLPNAGKS), 192–196 (FTTKI), 213–216 (DLPG), 280–283 (SKLD), and 307–309 (SIY). 2 residues coordinate Mg(2+): Ser-174 and Thr-194.

It belongs to the TRAFAC class OBG-HflX-like GTPase superfamily. OBG GTPase family. In terms of assembly, monomer. Mg(2+) is required as a cofactor.

It localises to the cytoplasm. In terms of biological role, an essential GTPase which binds GTP, GDP and possibly (p)ppGpp with moderate affinity, with high nucleotide exchange rates and a fairly low GTP hydrolysis rate. Plays a role in control of the cell cycle, stress response, ribosome biogenesis and in those bacteria that undergo differentiation, in morphogenesis control. The sequence is that of GTPase Obg from Borrelia recurrentis (strain A1).